The following is a 158-amino-acid chain: SH3 domain-binding glutamic acid-rich protein homolog (158 aa).

The span at 40-51 (TEPGKESEKELM) shows a compositional bias: basic and acidic residues. Positions 40 to 74 (TEPGKESEKELMQNKSTSNGGTVSDPEPRHPLPPQ) are disordered. A compositionally biased stretch (polar residues) spans 52–61 (QNKSTSNGGT). Residues 67 to 73 (PRHPLPP) carry the SH3-binding motif. Position 109 is a phosphothreonine (Thr-109). A disordered region spans residues 118–158 (LKQENGDAKKEEAETEAEDKKTEAGDGDVDVKEEAAEKAEV).

It belongs to the SH3BGR family.

The protein is SH3 domain-binding glutamic acid-rich protein homolog (Sh3beta) of Drosophila melanogaster (Fruit fly).